Reading from the N-terminus, the 113-residue chain is MGLKEYLFGKSSEDRACEFLRKLGFVILERNFHSKFGEIDIIALSSDKILHFIEVKATSGGYEAEYRLNKAKYMKILKTINFYMMKNEPNRDYQLDLLVVKNENFELIENISL.

This sequence belongs to the UPF0102 family.

The sequence is that of UPF0102 protein Ccon26_01140 from Campylobacter concisus (strain 13826).